The following is a 270-amino-acid chain: Probable septum site-determining protein MinC (270 aa).

Positions 105 to 129 are disordered; the sequence is DRRAPSSKAADEAPVQQAEPAAPAA. Residues 116-129 show a composition bias toward low complexity; it reads EAPVQQAEPAAPAA.

The protein belongs to the MinC family. As to quaternary structure, interacts with MinD and FtsZ.

In terms of biological role, cell division inhibitor that blocks the formation of polar Z ring septums. Rapidly oscillates between the poles of the cell to destabilize FtsZ filaments that have formed before they mature into polar Z rings. Prevents FtsZ polymerization. This is Probable septum site-determining protein MinC from Burkholderia pseudomallei (strain 668).